A 381-amino-acid polypeptide reads, in one-letter code: Glycerophosphocholine acyltransferase 1 (381 aa).

At 1-63 the chain is on the cytoplasmic side; it reads MANNEDSNSN…IAKQAEEHER (63 aa). A helical membrane pass occupies residues 64–84; the sequence is FINKVTHLVGVLGFGGFCFLL. The Lumenal segment spans residues 85-89; it reads GARPQ. The helical transmembrane segment at 90–110 threads the bilayer; sequence DIPLVYCFFYVIFVPLRWIYY. Over 111-116 the chain is Cytoplasmic; sequence RFKKWH. A helical membrane pass occupies residues 117–137; sequence YYLLDFCYYANTIFLVDLLLY. Residues 138 to 141 lie on the Lumenal side of the membrane; that stretch reads PKNE. The chain crosses the membrane as a helical span at residues 142 to 162; sequence KLFMVCFSFAEGPLAWAIIVW. Over 163 to 173 the chain is Cytoplasmic; that stretch reads RCSLVFSSPDK. The helical transmembrane segment at 174-194 threads the bilayer; sequence IVSVLIHLLPGLVFFTIRWWN. The Lumenal segment spans residues 195-223; it reads PATFAAMHPVGTDRRVSWPYVEDKAYLFT. The chain crosses the membrane as a helical span at residues 224–244; the sequence is WLFLVPLVVYTLWQVLYFLIV. The Cytoplasmic segment spans residues 245 to 291; it reads NVLRRQRLLRDPEVMTSYRELSKKAEKANNKLWQLSGLLGDQNRIWM. Residues 292 to 312 traverse the membrane as a helical segment; sequence YILFQAIFTVATMALTVPIFL. Topologically, residues 313–315 are lumenal; sequence SYR. The chain crosses the membrane as a helical span at residues 316-336; it reads LHVIFQILKISAAVWNGGSFL. At 337–381 the chain is on the cytoplasmic side; the sequence is LEVMPRQVIQKEKKKKAEMQPIEEQILHHEAVSHPTENEPKSTET.

It belongs to the GPC1 family.

It localises to the membrane. It carries out the reaction sn-glycerol 3-phosphocholine + an acyl-CoA = a 1-acyl-sn-glycero-3-phosphocholine + CoA. The catalysed reaction is sn-glycero-3-phosphoethanolamine + an acyl-CoA = a monoacyl-sn-glycero-3-phosphoethanolamine + CoA. It catalyses the reaction sn-glycerol 3-phosphocholine + (9Z)-octadecenoyl-CoA = (9Z-octadecenoyl)-sn-glycero-3-phosphocholine + CoA. In terms of biological role, glycerophosphocholine acyltransferase (GPCAT) that utilizes acyl-CoA to acylate glycero-3-phosphocholine (GPC), forming lysophosphatidylcholine (LPC). Shows broad acyl specificities with a preference for 16:0-CoA, polyunsaturated acyl-CoA, and the hydroxylated ricinoleoyl-CoA. Also catalyzes the acylation of glycero-3-phosphoethanolamine (GPE) with acyl-CoA. In addition to acyl-CoA, GPCAT efficiently utilizes LPC and lysophosphatidylethanolamine (LPE) as acyl donors in the acylation of GPC. Contributes to the maintenance of phosphatidylcholine (PC) homeostasis and might also have specific functions in acyl editing of PC, such as transferring acyl groups modified at the sn-2 position of PC to the sn-1. This Arabidopsis thaliana (Mouse-ear cress) protein is Glycerophosphocholine acyltransferase 1.